Reading from the N-terminus, the 207-residue chain is ATP-dependent Clp protease proteolytic subunit (207 aa).

The active-site Nucleophile is the serine 111. Histidine 136 is an active-site residue.

Belongs to the peptidase S14 family. Fourteen ClpP subunits assemble into 2 heptameric rings which stack back to back to give a disk-like structure with a central cavity, resembling the structure of eukaryotic proteasomes.

The protein localises to the cytoplasm. The catalysed reaction is Hydrolysis of proteins to small peptides in the presence of ATP and magnesium. alpha-casein is the usual test substrate. In the absence of ATP, only oligopeptides shorter than five residues are hydrolyzed (such as succinyl-Leu-Tyr-|-NHMec, and Leu-Tyr-Leu-|-Tyr-Trp, in which cleavage of the -Tyr-|-Leu- and -Tyr-|-Trp bonds also occurs).. Its function is as follows. Cleaves peptides in various proteins in a process that requires ATP hydrolysis. Has a chymotrypsin-like activity. Plays a major role in the degradation of misfolded proteins. This Psychromonas ingrahamii (strain DSM 17664 / CCUG 51855 / 37) protein is ATP-dependent Clp protease proteolytic subunit.